The primary structure comprises 197 residues: Transposon Tn10 TetC protein (197 aa).

Residues 12-72 (KSTYQSLVNS…ACYKQQLIMI (61 aa)) enclose the HTH tetR-type domain. Positions 35 to 54 (SIDEISGKALVTKGAFYHHF) form a DNA-binding region, H-T-H motif.

The protein is Transposon Tn10 TetC protein (tetC) of Escherichia coli.